Reading from the N-terminus, the 245-residue chain is Ureidoacrylate amidohydrolase RutB (245 aa).

Residue D38 is the Proton acceptor of the active site. K147 is an active-site residue. The Nucleophile role is filled by C180.

It belongs to the isochorismatase family. RutB subfamily.

The catalysed reaction is (Z)-3-ureidoacrylate + H2O + H(+) = (Z)-3-aminoacrylate + NH4(+) + CO2. It catalyses the reaction (Z)-3-ureidoacrylate + H2O = (Z)-3-aminoacrylate + carbamate + H(+). The enzyme catalyses (Z)-2-methylureidoacrylate + H2O + H(+) = (Z)-2-methylaminoacrylate + NH4(+) + CO2. Functionally, hydrolyzes ureidoacrylate to form aminoacrylate and carbamate. The carbamate hydrolyzes spontaneously, thereby releasing one of the nitrogen atoms of the pyrimidine ring as ammonia and one of its carbon atoms as CO2. The chain is Ureidoacrylate amidohydrolase RutB from Acinetobacter baylyi (strain ATCC 33305 / BD413 / ADP1).